A 156-amino-acid chain; its full sequence is Iron sulfur cluster assembly protein 2, mitochondrial (156 aa).

A mitochondrion-targeting transit peptide spans 1–26; sequence MFARLANPAHFKPLTGSHITRAAKRL.

Belongs to the NifU family. Component of the core Fe-S cluster (ISC) assembly machinery. Interacts with frataxin. Interacts with the mitochondrial co-chaperones JAC1 and SSQ1. Interacts with NFS1. Interacts with ferredoxin YAH1; interacts with the reduced form. Requires [2Fe-2S] cluster as cofactor.

The protein localises to the mitochondrion matrix. The protein operates within cofactor biosynthesis; iron-sulfur cluster biosynthesis. In terms of biological role, scaffold protein for the de novo synthesis of iron-sulfur (Fe-S) clusters within mitochondria, which is required for maturation of both mitochondrial and cytoplasmic [2Fe-2S] and [4Fe-4S] proteins. First, a [2Fe-2S] cluster is transiently assembled on the scaffold proteins ISU1 and ISU2. In a second step, the cluster is released from ISU1/ISU2, transferred to glutaredoxin GRX5, followed by the formation of mitochondrial [2Fe-2S] proteins, the synthesis of [4Fe-4S] clusters and their target-specific insertion into the recipient apoproteins. Cluster assembly on ISU1/ISU2 depends on the function of the cysteine desulfurase complex NFS1-ISD11, which serves as the sulfur donor for cluster synthesis, the iron-binding protein frataxin (YFH1) as the putative iron donor, and the electron transfer chain comprised of ferredoxin reductase ARH1 and ferredoxin YAH1, which receive their electrons from NADH. Fe-S cluster release from ISU1/ISU2 is achieved by interaction with the Hsp70 chaperone SSQ1, assisted by the DnaJ-like co-chaperone JAC1 and the nucleotide exchange factor MGE1. ISU1 is the major isoform in yeast, while ISU2 is not detectable in cells grown to stationary phase. Also involved in production of a sulfur precursor required for thiolation of cytoplasmic tRNAs. In Saccharomyces cerevisiae (strain ATCC 204508 / S288c) (Baker's yeast), this protein is Iron sulfur cluster assembly protein 2, mitochondrial.